The chain runs to 170 residues: Peptide deformylase (170 aa).

Positions 88 and 130 each coordinate Fe cation. E131 is a catalytic residue. Residue H134 coordinates Fe cation.

It belongs to the polypeptide deformylase family. The cofactor is Fe(2+).

The enzyme catalyses N-terminal N-formyl-L-methionyl-[peptide] + H2O = N-terminal L-methionyl-[peptide] + formate. Functionally, removes the formyl group from the N-terminal Met of newly synthesized proteins. Requires at least a dipeptide for an efficient rate of reaction. N-terminal L-methionine is a prerequisite for activity but the enzyme has broad specificity at other positions. This is Peptide deformylase from Acetivibrio thermocellus (strain ATCC 27405 / DSM 1237 / JCM 9322 / NBRC 103400 / NCIMB 10682 / NRRL B-4536 / VPI 7372) (Clostridium thermocellum).